A 440-amino-acid polypeptide reads, in one-letter code: Chromosome partition protein MukF (440 aa).

The leucine-zipper stretch occupies residues leucine 208–isoleucine 236.

The protein belongs to the MukF family. As to quaternary structure, interacts, and probably forms a ternary complex, with MukE and MukB via its C-terminal region. The complex formation is stimulated by calcium or magnesium. It is required for an interaction between MukE and MukB.

The protein resides in the cytoplasm. It is found in the nucleoid. Involved in chromosome condensation, segregation and cell cycle progression. May participate in facilitating chromosome segregation by condensation DNA from both sides of a centrally located replisome during cell division. Not required for mini-F plasmid partitioning. Probably acts via its interaction with MukB and MukE. Overexpression results in anucleate cells. It has a calcium binding activity. This Escherichia coli (strain ATCC 8739 / DSM 1576 / NBRC 3972 / NCIMB 8545 / WDCM 00012 / Crooks) protein is Chromosome partition protein MukF.